The primary structure comprises 660 residues: MTTIIELPEVLANQIAAGEVIERPASVVKELVENAIDAKSSQITVEIEESGLKMMQITDNGEGMSHEDLPLSLRRHATSKIKSQSDLFRIRTLGFRGEALPSVASISKLTIKTATAEAEHGSILVASGGKIEQLEAVSTPVGTKIKVENLFYNTPARLKYMKSLQAELAHVVDVVNRLSLAHPEIAFTLISDGKQLTQTSGTGDLRQALAGIYGLNTAKKMIDISSADLDFEVGGFVSLPELTRANRNYITILINGRYIKNFLLNRAILDGYGSKLMVGRFPIAVIDIQIDPYLADVNVHPTKQEIRISKERELMALISTAISESLREQDLIPDALENLARSSTRSFSKPEQTSLPLQPSQLYYDPQKNDFFTKETVVSEDSPQGFNHEVLIDSDVKQVDNLQVAKTESEAAAPSVKYASRPDPMLSDGEHPGLDVHNKQKLSQMLDRLENEEQSVFPELDYFGQMHGTYLFAQGRDGLFIIDQHAAQERVKYEYYRDKIGEVDNSLQQLLVPYLFEFSGSDFINLQEKMSLLNEVGIYLEPYGNHTFILREHPIWMKEAEIESGVYEMCDMLLLTNEVSIKTYRAELAIMMSCKRSIKANHSLDDYSARQLLLQLAQCKNPYNCPHGRPVLINFSKADMEKMFRRIQENHTSLRELGKY.

The protein belongs to the DNA mismatch repair MutL/HexB family.

Its function is as follows. This protein is involved in the repair of mismatches in DNA. It is required for dam-dependent methyl-directed DNA mismatch repair. May act as a 'molecular matchmaker', a protein that promotes the formation of a stable complex between two or more DNA-binding proteins in an ATP-dependent manner without itself being part of a final effector complex. The sequence is that of DNA mismatch repair protein MutL from Streptococcus equi subsp. zooepidemicus (strain MGCS10565).